We begin with the raw amino-acid sequence, 96 residues long: Beta-defensin 20 (96 aa).

The signal sequence occupies residues 1–21 (MKLLQVLLVLLFVALADGAQP). Intrachain disulfides connect Cys24–Cys52, Cys32–Cys46, and Cys36–Cys53.

Belongs to the beta-defensin family.

The protein localises to the secreted. Its function is as follows. Has antibacterial activity. This is Beta-defensin 20 (Defb20) from Mus musculus (Mouse).